Reading from the N-terminus, the 53-residue chain is UPF0391 membrane protein Meso_3392 (53 aa).

2 helical membrane-spanning segments follow: residues 4-24 (WILI…HSLA) and 33-53 (ILIA…IAIA).

It belongs to the UPF0391 family.

The protein localises to the cell membrane. The polypeptide is UPF0391 membrane protein Meso_3392 (Chelativorans sp. (strain BNC1)).